Consider the following 259-residue polypeptide: Putative zinc metalloprotease Rip2 (259 aa).

Transmembrane regions (helical) follow at residues 14-34 (PIFL…WLAG) and 39-59 (PLAY…SLCL). His60 serves as a coordination point for Zn(2+). Glu61 is a catalytic residue. Zn(2+) is bound at residue His64. The next 4 membrane-spanning stretches (helical) occupy residues 97-117 (GLPM…AVYV), 128-148 (TLVS…LLAA), 156-176 (IHAV…TALV), and 215-235 (LVLF…YWLF).

It belongs to the peptidase M50B family. Zn(2+) is required as a cofactor.

The protein resides in the cell membrane. In Mycobacterium tuberculosis (strain ATCC 35801 / TMC 107 / Erdman), this protein is Putative zinc metalloprotease Rip2 (rip2).